Reading from the N-terminus, the 330-residue chain is Aspartate--ammonia ligase (330 aa).

It belongs to the class-II aminoacyl-tRNA synthetase family. AsnA subfamily.

Its subcellular location is the cytoplasm. It catalyses the reaction L-aspartate + NH4(+) + ATP = L-asparagine + AMP + diphosphate + H(+). Its pathway is amino-acid biosynthesis; L-asparagine biosynthesis; L-asparagine from L-aspartate (ammonia route): step 1/1. This chain is Aspartate--ammonia ligase, found in Streptococcus pneumoniae serotype 2 (strain D39 / NCTC 7466).